The following is a 305-amino-acid chain: UDP-3-O-acyl-N-acetylglucosamine deacetylase (305 aa).

3 residues coordinate Zn(2+): H79, H238, and D242. H265 (proton donor) is an active-site residue.

The protein belongs to the LpxC family. Requires Zn(2+) as cofactor.

It catalyses the reaction a UDP-3-O-[(3R)-3-hydroxyacyl]-N-acetyl-alpha-D-glucosamine + H2O = a UDP-3-O-[(3R)-3-hydroxyacyl]-alpha-D-glucosamine + acetate. It participates in glycolipid biosynthesis; lipid IV(A) biosynthesis; lipid IV(A) from (3R)-3-hydroxytetradecanoyl-[acyl-carrier-protein] and UDP-N-acetyl-alpha-D-glucosamine: step 2/6. Functionally, catalyzes the hydrolysis of UDP-3-O-myristoyl-N-acetylglucosamine to form UDP-3-O-myristoylglucosamine and acetate, the committed step in lipid A biosynthesis. In Escherichia coli O45:K1 (strain S88 / ExPEC), this protein is UDP-3-O-acyl-N-acetylglucosamine deacetylase.